The sequence spans 486 residues: Outer dynein arm-docking complex subunit 4 (486 aa).

TPR repeat units follow at residues 14–47 (FTTY…QPDD), 49–81 (NCLV…NKNY), and 82–115 (FKGL…RPEL). A disordered region spans residues 153–180 (GVHPQNLNPSNKKESKKHSKKTDKGEKT). TPR repeat units lie at residues 314–347 (GNLH…AKKC), 354–387 (SRAL…ACGG), 391–424 (AWLF…ADDI), and 431–464 (LNAS…AKLL).

As to quaternary structure, component of the outer dynein arm-docking complex along with ODAD1, ODAD2 and ODAD3.

It is found in the cytoplasm. The protein localises to the cytoskeleton. Its subcellular location is the cilium axoneme. Component of the outer dynein arm-docking complex (ODA-DC) that mediates outer dynein arms (ODA) binding onto the doublet microtubule. Plays an essential role for the assembly of ODA-DC and in the docking of ODA in ciliary axoneme. This Danio rerio (Zebrafish) protein is Outer dynein arm-docking complex subunit 4 (odad4).